We begin with the raw amino-acid sequence, 1203 residues long: ATP-dependent helicase/nuclease subunit A (1203 aa).

A UvrD-like helicase ATP-binding domain is found at 4–472 (VKLTPEQNEA…IRLKENFRSR (469 aa)). Residue 25–32 (ASAGSGKT) participates in ATP binding. The 283-residue stretch at 503-785 (VQGNISDYPV…RVMTFHKSKG (283 aa)) folds into the UvrD-like helicase C-terminal domain.

Belongs to the helicase family. AddA subfamily. As to quaternary structure, heterodimer of AddA and AddB/RexB. Mg(2+) is required as a cofactor.

It carries out the reaction Couples ATP hydrolysis with the unwinding of duplex DNA by translocating in the 3'-5' direction.. It catalyses the reaction ATP + H2O = ADP + phosphate + H(+). In terms of biological role, the heterodimer acts as both an ATP-dependent DNA helicase and an ATP-dependent, dual-direction single-stranded exonuclease. Recognizes the chi site generating a DNA molecule suitable for the initiation of homologous recombination. The AddA nuclease domain is required for chi fragment generation; this subunit has the helicase and 3' -&gt; 5' nuclease activities. In Lactococcus lactis subsp. cremoris (strain SK11), this protein is ATP-dependent helicase/nuclease subunit A.